The sequence spans 124 residues: Small ribosomal subunit protein uS12 (124 aa).

A 3-methylthioaspartic acid modification is found at Asp89.

The protein belongs to the universal ribosomal protein uS12 family. As to quaternary structure, part of the 30S ribosomal subunit. Contacts proteins S8 and S17. May interact with IF1 in the 30S initiation complex.

Functionally, with S4 and S5 plays an important role in translational accuracy. In terms of biological role, interacts with and stabilizes bases of the 16S rRNA that are involved in tRNA selection in the A site and with the mRNA backbone. Located at the interface of the 30S and 50S subunits, it traverses the body of the 30S subunit contacting proteins on the other side and probably holding the rRNA structure together. The combined cluster of proteins S8, S12 and S17 appears to hold together the shoulder and platform of the 30S subunit. The polypeptide is Small ribosomal subunit protein uS12 (Pectobacterium atrosepticum (strain SCRI 1043 / ATCC BAA-672) (Erwinia carotovora subsp. atroseptica)).